Reading from the N-terminus, the 441-residue chain is Methylenetetrahydrofolate--tRNA-(uracil-5-)-methyltransferase TrmFO (441 aa).

10–15 serves as a coordination point for FAD; sequence GAGLAG.

Belongs to the MnmG family. TrmFO subfamily. Requires FAD as cofactor.

It is found in the cytoplasm. It catalyses the reaction uridine(54) in tRNA + (6R)-5,10-methylene-5,6,7,8-tetrahydrofolate + NADH + H(+) = 5-methyluridine(54) in tRNA + (6S)-5,6,7,8-tetrahydrofolate + NAD(+). The catalysed reaction is uridine(54) in tRNA + (6R)-5,10-methylene-5,6,7,8-tetrahydrofolate + NADPH + H(+) = 5-methyluridine(54) in tRNA + (6S)-5,6,7,8-tetrahydrofolate + NADP(+). Catalyzes the folate-dependent formation of 5-methyl-uridine at position 54 (M-5-U54) in all tRNAs. This is Methylenetetrahydrofolate--tRNA-(uracil-5-)-methyltransferase TrmFO from Desulforamulus reducens (strain ATCC BAA-1160 / DSM 100696 / MI-1) (Desulfotomaculum reducens).